Here is a 242-residue protein sequence, read N- to C-terminus: Small ribosomal subunit protein uS2 (242 aa).

The protein belongs to the universal ribosomal protein uS2 family.

The chain is Small ribosomal subunit protein uS2 from Aliivibrio fischeri (strain ATCC 700601 / ES114) (Vibrio fischeri).